A 288-amino-acid chain; its full sequence is Energy-coupling factor transporter ATP-binding protein EcfA2 (288 aa).

The ABC transporter domain occupies 3–246 (ITFDHVSFTY…PAWLKANQLG (244 aa)). 40–47 (GHTGSGKS) contributes to the ATP binding site. E171 (proton acceptor) is an active-site residue.

This sequence belongs to the ABC transporter superfamily. Energy-coupling factor EcfA family. As to quaternary structure, forms a stable energy-coupling factor (ECF) transporter complex probably composed of 2 membrane-embedded substrate-binding proteins (S component), 2 ATP-binding proteins (A component) and 2 transmembrane proteins (T component). This complex interacts with a number of substrate-specific components, including FolT and ThiT for 5-formyltetrahydrofolate and thiamine respectively.

Its subcellular location is the cell membrane. ATP-binding (A) component of a common energy-coupling factor (ECF) ABC-transporter complex. Unlike classic ABC transporters this ECF transporter provides the energy necessary to transport a number of different substrates including 5-formyltetrahydrofolate and thiamine. Expression of the complex plus FolT or ThiT in Lactococcus lactis subsp. cremoris (strain NZ9000) allows 5-formyltetrahydrofolate or thiamine uptake respectively; 5-formyltetrahydrofolate or thiamine are not taken up in the absence of FolT/ThiT or the EcfA1A2T complex. Deenergized L.lactis subsp. cremoris (treated with 2-deoxyglucose) do not take up substrate. The chain is Energy-coupling factor transporter ATP-binding protein EcfA2 from Lacticaseibacillus paracasei (strain ATCC 334 / BCRC 17002 / CCUG 31169 / CIP 107868 / KCTC 3260 / NRRL B-441) (Lactobacillus paracasei).